Reading from the N-terminus, the 283-residue chain is Putative sugar uptake protein BC_0219 (283 aa).

A run of 10 helical transmembrane segments spans residues 4–21 (LLAL…LVSV), 26–48 (GAYS…MYVF), 52–71 (ALTM…WALG), 84–106 (VSTT…GVIA), 110–132 (WTTT…GVVF), 151–173 (LLTL…WYNI), 178–195 (AILP…VLTS), 208–230 (ALSG…RVGV), 234–253 (FPLS…VFLG), and 260–279 (QLIF…VLLG).

The protein belongs to the GRP transporter (TC 2.A.7.5) family.

It is found in the cell membrane. In Bacillus cereus (strain ATCC 14579 / DSM 31 / CCUG 7414 / JCM 2152 / NBRC 15305 / NCIMB 9373 / NCTC 2599 / NRRL B-3711), this protein is Putative sugar uptake protein BC_0219.